A 121-amino-acid polypeptide reads, in one-letter code: Large ribosomal subunit protein bL20 (121 aa).

The protein belongs to the bacterial ribosomal protein bL20 family.

Its function is as follows. Binds directly to 23S ribosomal RNA and is necessary for the in vitro assembly process of the 50S ribosomal subunit. It is not involved in the protein synthesizing functions of that subunit. The polypeptide is Large ribosomal subunit protein bL20 (Wolbachia sp. subsp. Drosophila simulans (strain wRi)).